Here is a 307-residue protein sequence, read N- to C-terminus: DNA damage tolerance protein rad31 (307 aa).

Could be involved in a ubiquitin-related process important for DNA damage tolerance. Acts in a process which is defective in the checkpoint rad mutants and which involves hus5. The polypeptide is DNA damage tolerance protein rad31 (rad31) (Schizosaccharomyces pombe (strain 972 / ATCC 24843) (Fission yeast)).